The following is a 1021-amino-acid chain: Caspase recruitment domain-containing protein 10 (1021 aa).

Residues 1 to 24 (MQGRADAGEADEEAGAGSGSEAEE) form a disordered region. Ser-18 carries the phosphoserine modification. Positions 23–115 (EEDALWERIE…EHFTLLTGQE (93 aa)) constitute a CARD domain. Residues 138 to 450 (TEVRRLREAR…LEAQLQRTQG (313 aa)) are a coiled coil. Disordered regions lie at residues 475–544 (EFPS…MSDI), 597–616 (SPPA…PGLG), and 790–809 (LVRP…QLPA). Composition is skewed to basic and acidic residues over residues 495-508 (HTSE…KEIN) and 525-535 (RQREEDPEPPK).

As to quaternary structure, CARD10 and BCL10 bind to each other by CARD-CARD interaction. They both participate in a complex with MALT1, where MALT1 binds to BCL10. Interacts with TMEM43; this interaction is essential for EGFR-mediated NF-kappa-B activation. In terms of tissue distribution, highly expressed in kidney, heart followed by brain, lung, liver, skeletal muscle and testis.

Its function is as follows. Scaffold protein that plays an important role in mediating the activation of NF-kappa-B via BCL10 or EGFR. The sequence is that of Caspase recruitment domain-containing protein 10 (Card10) from Mus musculus (Mouse).